A 511-amino-acid polypeptide reads, in one-letter code: Maturase K (511 aa).

The protein belongs to the intron maturase 2 family. MatK subfamily.

The protein localises to the plastid. It is found in the chloroplast. Its function is as follows. Usually encoded in the trnK tRNA gene intron. Probably assists in splicing its own and other chloroplast group II introns. This Paulownia tomentosa (Princess tree) protein is Maturase K.